Reading from the N-terminus, the 130-residue chain is Small ribosomal subunit protein uS9 (130 aa).

The disordered stretch occupies residues 111-130 (VERKKVGLHKARRATQFSKR). A compositionally biased stretch (basic residues) spans 116-130 (VGLHKARRATQFSKR).

The protein belongs to the universal ribosomal protein uS9 family.

The polypeptide is Small ribosomal subunit protein uS9 (Xylella fastidiosa (strain M23)).